Consider the following 124-residue polypeptide: Large ribosomal subunit protein bL17 (124 aa).

The protein belongs to the bacterial ribosomal protein bL17 family. As to quaternary structure, part of the 50S ribosomal subunit. Contacts protein L32.

This is Large ribosomal subunit protein bL17 from Persephonella marina (strain DSM 14350 / EX-H1).